The following is a 326-amino-acid chain: Vitamin B12 import system permease protein BtuC (326 aa).

Over 1 to 10 the chain is Cytoplasmic; it reads MLTLARQQQR. The helical transmembrane segment at 11 to 35 threads the bilayer; the sequence is QNIRWLLCLSVLMLLALLLSLCAGE. Over 36-56 the chain is Periplasmic; it reads QWISPGDWFSPRGELFVWQIR. The helical transmembrane segment at 57-81 threads the bilayer; sequence LPRTLAVLLVGAALAISGAVMQALF. Topologically, residues 82 to 92 are cytoplasmic; that stretch reads ENPLAEPGLLG. Residues 93–107 form a helical membrane-spanning segment; sequence VSNGAGVGLIAAVLL. Residues 108 to 113 lie on the Periplasmic side of the membrane; the sequence is GQGQLP. Residues 114–138 form a helical membrane-spanning segment; the sequence is NWALGLCAIAGALIITLILLRFARR. The Cytoplasmic segment spans residues 139-141; sequence HLS. Residues 142–166 form a helical membrane-spanning segment; sequence TSRLLLAGVALGIICSALMTWAIYF. The Periplasmic portion of the chain corresponds to 167–190; that stretch reads STSVDLRQLMYWMMGGFGGVDWRQ. The chain crosses the membrane as a helical span at residues 191-206; that stretch reads SWLMLALIPMLLWICC. Residues 207–228 lie on the Cytoplasmic side of the membrane; sequence QSRPMNMLALGEISARQLGLPL. Residues 229 to 249 form a helical membrane-spanning segment; it reads WFWRNVLVAATGWMVGVSVAL. The Periplasmic portion of the chain corresponds to 250 to 257; sequence AGAIGFIG. A helical membrane pass occupies residues 258-267; that stretch reads LVIPHILRLC. Topologically, residues 268–274 are cytoplasmic; it reads GLTDHRA. A helical transmembrane segment spans residues 275 to 296; that stretch reads LLPGCALAGASALLLADIVARL. At 297–304 the chain is on the periplasmic side; that stretch reads ALAAAELP. A helical transmembrane segment spans residues 305–324; that stretch reads IGVVTATLGAPVFIWLLLKA. Residues 325 to 326 lie on the Cytoplasmic side of the membrane; it reads GR.

This sequence belongs to the binding-protein-dependent transport system permease family. FecCD subfamily. The complex is composed of two ATP-binding proteins (BtuD), two transmembrane proteins (BtuC) and a solute-binding protein (BtuF).

The protein resides in the cell inner membrane. In terms of biological role, part of the ABC transporter complex BtuCDF involved in vitamin B12 import. Involved in the translocation of the substrate across the membrane. The sequence is that of Vitamin B12 import system permease protein BtuC (btuC) from Escherichia coli O157:H7.